The sequence spans 264 residues: 3-methyl-2-oxobutanoate hydroxymethyltransferase (264 aa).

Positions 45 and 84 each coordinate Mg(2+). Residues 45–46 (DS), Asp-84, and Lys-112 each bind 3-methyl-2-oxobutanoate. Glu-114 lines the Mg(2+) pocket. The active-site Proton acceptor is the Glu-181.

Belongs to the PanB family. As to quaternary structure, homodecamer; pentamer of dimers. Requires Mg(2+) as cofactor.

The protein localises to the cytoplasm. It carries out the reaction 3-methyl-2-oxobutanoate + (6R)-5,10-methylene-5,6,7,8-tetrahydrofolate + H2O = 2-dehydropantoate + (6S)-5,6,7,8-tetrahydrofolate. Its pathway is cofactor biosynthesis; (R)-pantothenate biosynthesis; (R)-pantoate from 3-methyl-2-oxobutanoate: step 1/2. Its function is as follows. Catalyzes the reversible reaction in which hydroxymethyl group from 5,10-methylenetetrahydrofolate is transferred onto alpha-ketoisovalerate to form ketopantoate. The polypeptide is 3-methyl-2-oxobutanoate hydroxymethyltransferase (Shewanella oneidensis (strain ATCC 700550 / JCM 31522 / CIP 106686 / LMG 19005 / NCIMB 14063 / MR-1)).